The sequence spans 124 residues: Cytoinsectotoxin-4 (124 aa).

The N-terminal stretch at 1 to 19 (MKCFILAAALVLAFACIAA) is a signal peptide. A propeptide spanning residues 20 to 62 (SEPAETENEDLDDLSDLEDEEWLDELEEAAEYLESLREFEESR) is cleaved from the precursor. Phe-123 is subject to Phenylalanine amide.

It belongs to the cationic peptide 06 (cytoinsectotoxin) family. In terms of tissue distribution, expressed by the venom gland.

The protein resides in the secreted. Its function is as follows. Insecticidal and antimicrobial peptide. Has insecticidal activity against larvae of flesh fly S.carnaria. Has antibacterial activity against Gram-positive bacterium B.subtilis B-501 (MIC=2.5 uM) and Gram-negative bacterium E.coli DH5alpha (MIC=10 uM). The protein is Cytoinsectotoxin-4 of Lachesana tarabaevi (Spider).